Here is a 240-residue protein sequence, read N- to C-terminus: Ribonuclease 3 (240 aa).

The 133-residue stretch at 9–141 (VEEFQKKTGI…LLAAIYLDQG (133 aa)) folds into the RNase III domain. Residue E54 coordinates Mg(2+). The active site involves D58. 2 residues coordinate Mg(2+): D127 and E130. E130 is an active-site residue. The DRBM domain occupies 168-237 (DYKTALQEIV…ARIAYEKLLK (70 aa)).

It belongs to the ribonuclease III family. As to quaternary structure, homodimer. Mg(2+) is required as a cofactor.

The protein resides in the cytoplasm. The enzyme catalyses Endonucleolytic cleavage to 5'-phosphomonoester.. Functionally, digests double-stranded RNA. Involved in the processing of primary rRNA transcript to yield the immediate precursors to the large and small rRNAs (23S and 16S). Processes some mRNAs, and tRNAs when they are encoded in the rRNA operon. Processes pre-crRNA and tracrRNA of type II CRISPR loci if present in the organism. The protein is Ribonuclease 3 of Thermotoga petrophila (strain ATCC BAA-488 / DSM 13995 / JCM 10881 / RKU-1).